A 748-amino-acid polypeptide reads, in one-letter code: WD repeat-containing protein 91 (748 aa).

Residues glutamine 183–leucine 228 are a coiled coil. Serine 257 carries the phosphoserine modification. Positions leucine 266–proline 279 are enriched in low complexity. Positions leucine 266–proline 368 are disordered. Positions proline 284–threonine 300 are enriched in polar residues. Serine 289 and serine 294 each carry phosphoserine. Basic and acidic residues predominate over residues arginine 333–leucine 344. Over residues leucine 345 to cysteine 354 the composition is skewed to polar residues. 7 WD repeats span residues glutamate 407 to alanine 446, isoleucine 449 to glutamate 489, valine 512 to glutamine 556, proline 561 to serine 600, alanine 603 to serine 642, valine 665 to glutamate 703, and glycine 710 to leucine 748.

This sequence belongs to the WD repeat WDR91 family. In terms of assembly, interacts with WDR81; involved in early to late endosome cargo transport. Interacts with BECN1; negatively regulates the PI3 kinase/PI3K activity associated with endosomal membranes.

It is found in the early endosome membrane. Its subcellular location is the late endosome membrane. Functions as a negative regulator of the PI3 kinase/PI3K activity associated with endosomal membranes via BECN1, a core subunit of the PI3K complex. By modifying the phosphatidylinositol 3-phosphate/PtdInsP3 content of endosomal membranes may regulate endosome fusion, recycling, sorting and early to late endosome transport. It is for instance, required for the delivery of cargos like BST2/tetherin from early to late endosome and thereby participates indirectly to their degradation by the lysosome. May play a role in meiosis. This is WD repeat-containing protein 91 from Mus musculus (Mouse).